The primary structure comprises 381 residues: Creatine kinase B-type (381 aa).

A Phosphoserine modification is found at Ser4. The 88-residue stretch at 11–98 (KLRFPAEDEF…FDPIIEDRHG (88 aa)) folds into the Phosphagen kinase N-terminal domain. The residue at position 35 (Thr35) is a Phosphothreonine. A Glycyl lysine isopeptide (Lys-Gly) (interchain with G-Cter in ubiquitin) cross-link involves residue Lys45. Val72 provides a ligand contact to creatine. Residues 96-110 (RHGGYKPSDEHKTDL) show a composition bias toward basic and acidic residues. The tract at residues 96-122 (RHGGYKPSDEHKTDLNPDNLQGGDDLD) is disordered. Glycyl lysine isopeptide (Lys-Gly) (interchain with G-Cter in ubiquitin) cross-links involve residues Lys101 and Lys107. Tyr125 carries the post-translational modification Phosphotyrosine. The Phosphagen kinase C-terminal domain maps to 125–367 (YVLSSRVRTG…KLLIEMEQRL (243 aa)). Residues 128–132 (SSRVR), Arg130, Arg132, and His191 each bind ATP. Residues 130 to 138 (RVRTGRSIR) are internal MTS-like signal. Ser199 is subject to Phosphoserine. A creatine-binding site is contributed by Glu232. ATP is bound at residue Arg236. Residue Tyr269 is modified to 3'-nitrotyrosine. Creatine is bound at residue Ser285. Residue Arg292 participates in ATP binding. Phosphoserine is present on Ser309. ATP-binding positions include Arg320, 320–325 (RGTGGV), and Asp335. Thr322 carries the post-translational modification Phosphothreonine. Lys381 participates in a covalent cross-link: Glycyl lysine isopeptide (Lys-Gly) (interchain with G-Cter in ubiquitin).

The protein belongs to the ATP:guanido phosphotransferase family. In terms of assembly, dimer of identical or non-identical chains, which can be either B (brain type) or M (muscle type). With MM being the major form in skeletal muscle and myocardium, MB existing in myocardium, and BB existing in many tissues, especially brain. Interacts with SLC12A6 (via C-terminus); the interaction may be required for SLC12A6 potassium-chloride cotransport activity. In terms of processing, ubiquitinated by the ECS(ASB9) complex, leading to its degradation by the proteasome.

The protein resides in the cytoplasm. Its subcellular location is the cytosol. It is found in the mitochondrion. It localises to the cell membrane. The enzyme catalyses creatine + ATP = N-phosphocreatine + ADP + H(+). Its function is as follows. Reversibly catalyzes the transfer of phosphate between ATP and various phosphogens (e.g. creatine phosphate). Creatine kinase isoenzymes play a central role in energy transduction in tissues with large, fluctuating energy demands, such as skeletal muscle, heart, brain and spermatozoa. Acts as a key regulator of adaptive thermogenesis as part of the futile creatine cycle: localizes to the mitochondria of thermogenic fat cells and acts by mediating phosphorylation of creatine to initiate a futile cycle of creatine phosphorylation and dephosphorylation. During the futile creatine cycle, creatine and N-phosphocreatine are in a futile cycle, which dissipates the high energy charge of N-phosphocreatine as heat without performing any mechanical or chemical work. The chain is Creatine kinase B-type from Homo sapiens (Human).